Here is a 93-residue protein sequence, read N- to C-terminus: UPF0728 protein C10orf53 homolog (93 aa).

This sequence belongs to the UPF0728 family.

This chain is UPF0728 protein C10orf53 homolog, found in Bos taurus (Bovine).